The sequence spans 384 residues: Histidinol-phosphate aminotransferase 1 (384 aa).

An N6-(pyridoxal phosphate)lysine modification is found at Lys-233.

This sequence belongs to the class-II pyridoxal-phosphate-dependent aminotransferase family. Histidinol-phosphate aminotransferase subfamily. Homodimer. Pyridoxal 5'-phosphate is required as a cofactor.

It catalyses the reaction L-histidinol phosphate + 2-oxoglutarate = 3-(imidazol-4-yl)-2-oxopropyl phosphate + L-glutamate. Its pathway is amino-acid biosynthesis; L-histidine biosynthesis; L-histidine from 5-phospho-alpha-D-ribose 1-diphosphate: step 7/9. The protein is Histidinol-phosphate aminotransferase 1 of Thiobacillus denitrificans (strain ATCC 25259 / T1).